The sequence spans 701 residues: Putative pentatricopeptide repeat-containing protein At3g25970 (701 aa).

PPR repeat units follow at residues 34–64 (DIYV…MPKR), 65–99 (DSVS…GSDV), 100–134 (DGYS…GYEC), 135–165 (NVYV…ISEP), 166–200 (NSVS…AAVT), 202–236 (DAGT…GLQH), 237–267 (EITI…LGGS), 269–303 (DLIS…WVET), 304–338 (DIYT…GLEQ), 339–371 (VTSA…LKSK), 372–406 (DLIS…EIKV), 407–441 (DDYA…GFVS), 442–472 (NEFV…ISSK), 474–508 (STVA…NVKL), 509–539 (DHVT…MEPV), and 545–575 (RMEH…MPLN). The type E motif stretch occupies residues 580–655 (VLKTFLGVCR…VPGWSWIEIR (76 aa)). The type E(+) motif stretch occupies residues 656–686 (NQVKAFNAEDRSNPLCQDIYMMIKDLTQEMQ).

This sequence belongs to the PPR family. PCMP-E subfamily.

The polypeptide is Putative pentatricopeptide repeat-containing protein At3g25970 (PCMP-E46) (Arabidopsis thaliana (Mouse-ear cress)).